Reading from the N-terminus, the 82-residue chain is Polyferredoxin protein FwdG (82 aa).

4Fe-4S ferredoxin-type domains follow at residues 4-33 and 51-80; these read YELV…PETW and VVTV…LVFK. [4Fe-4S] cluster-binding residues include Cys13, Cys16, Cys19, Cys23, Cys60, Cys63, Cys66, and Cys70.

It depends on [4Fe-4S] cluster as a cofactor.

This Methanocaldococcus jannaschii (strain ATCC 43067 / DSM 2661 / JAL-1 / JCM 10045 / NBRC 100440) (Methanococcus jannaschii) protein is Polyferredoxin protein FwdG (fwdG).